The primary structure comprises 166 residues: Large ribosomal subunit protein uL10 (166 aa).

It belongs to the universal ribosomal protein uL10 family. Part of the ribosomal stalk of the 50S ribosomal subunit. The N-terminus interacts with L11 and the large rRNA to form the base of the stalk. The C-terminus forms an elongated spine to which L12 dimers bind in a sequential fashion forming a multimeric L10(L12)X complex.

Forms part of the ribosomal stalk, playing a central role in the interaction of the ribosome with GTP-bound translation factors. This chain is Large ribosomal subunit protein uL10, found in Shewanella woodyi (strain ATCC 51908 / MS32).